The following is a 322-amino-acid chain: tRNA uridine(34) hydroxylase (322 aa).

The region spanning 125–219 is the Rhodanese domain; the sequence is QDPNTIVIDA…YGKDPEVQGK (95 aa). C179 serves as the catalytic Cysteine persulfide intermediate.

The protein belongs to the TrhO family.

The catalysed reaction is uridine(34) in tRNA + AH2 + O2 = 5-hydroxyuridine(34) in tRNA + A + H2O. In terms of biological role, catalyzes oxygen-dependent 5-hydroxyuridine (ho5U) modification at position 34 in tRNAs. The polypeptide is tRNA uridine(34) hydroxylase (Bacillus subtilis (strain 168)).